Consider the following 651-residue polypeptide: Probable ATP-dependent helicase MJ0942 (651 aa).

A Helicase ATP-binding domain is found at 6-255 (YIKEKFPYPK…EIIEKYLTSR (250 aa)). ATP is bound at residue 41–48 (APTGVGKT). [4Fe-4S] cluster contacts are provided by C102, C149, and C154. The DEAH box motif lies at 195 to 198 (DEAH). The Helicase C-terminal domain maps to 449–638 (NLLKILEAIN…NYEVMSLDMA (190 aa)).

It belongs to the helicase family. DinG subfamily. Requires [4Fe-4S] cluster as cofactor.

The catalysed reaction is Couples ATP hydrolysis with the unwinding of duplex DNA at the replication fork by translocating in the 5'-3' direction. This creates two antiparallel DNA single strands (ssDNA). The leading ssDNA polymer is the template for DNA polymerase III holoenzyme which synthesizes a continuous strand.. It catalyses the reaction ATP + H2O = ADP + phosphate + H(+). Its function is as follows. Might be a 5'-3' DNA helicase. The protein is Probable ATP-dependent helicase MJ0942 of Methanocaldococcus jannaschii (strain ATCC 43067 / DSM 2661 / JAL-1 / JCM 10045 / NBRC 100440) (Methanococcus jannaschii).